The chain runs to 346 residues: Biotin synthase (346 aa).

In terms of domain architecture, Radical SAM core spans 38 to 256; the sequence is RQVQVSTLLS…IAVARIMMPT (219 aa). [4Fe-4S] cluster-binding residues include Cys-53, Cys-57, and Cys-60. [2Fe-2S] cluster contacts are provided by Cys-97, Cys-128, Cys-188, and Arg-260.

The protein belongs to the radical SAM superfamily. Biotin synthase family. Homodimer. [4Fe-4S] cluster serves as cofactor. Requires [2Fe-2S] cluster as cofactor.

The catalysed reaction is (4R,5S)-dethiobiotin + (sulfur carrier)-SH + 2 reduced [2Fe-2S]-[ferredoxin] + 2 S-adenosyl-L-methionine = (sulfur carrier)-H + biotin + 2 5'-deoxyadenosine + 2 L-methionine + 2 oxidized [2Fe-2S]-[ferredoxin]. It functions in the pathway cofactor biosynthesis; biotin biosynthesis; biotin from 7,8-diaminononanoate: step 2/2. Its function is as follows. Catalyzes the conversion of dethiobiotin (DTB) to biotin by the insertion of a sulfur atom into dethiobiotin via a radical-based mechanism. The polypeptide is Biotin synthase (Escherichia coli O157:H7).